The primary structure comprises 452 residues: UPF0210 protein Dred_1672 (452 aa).

Belongs to the UPF0210 family. As to quaternary structure, homodimer.

The sequence is that of UPF0210 protein Dred_1672 from Desulforamulus reducens (strain ATCC BAA-1160 / DSM 100696 / MI-1) (Desulfotomaculum reducens).